Here is a 426-residue protein sequence, read N- to C-terminus: MVKSSNIAIHSHVRSLGLDDCGNPVEKPDAVIGQENAREAAGLIVEMVRTKRMSGRAVLISGPVGSGKTALAVGISEELGAGTPFTSMSGSEVYSNEVKKTEVLEEALRRSILVRMRELKDVYEGEVVELRIVDEENPLSSYPKRIKEMFVILKTSKESKKLKLAPSLYEQIDKQRIVNGDVVYIEVNSGVIKKLGRSEAHMNDFDLEADTYVPIPKGEVLKRKEVMQSVTLHDLDMANARPSGQDMLSLVFRILSPRKTEITERLRGDVNRMVNGYLENGNAEIVPGVLFIDEVHMLDVECFTFLHKVIESPLSPTIIFASNKGMAPIKGSDGLLGPFGITKDLLDRIVIISVKRNPDEANREIIRRRMKEEGLEMDDDAFGFFVGLSTSRSLRYCISLIPLLKTYGGCVSVRNVEEVAELFHDS.

62–69 (GPVGSGKT) serves as a coordination point for ATP.

This sequence belongs to the RuvB family. As to quaternary structure, component of the SWR1 chromatin remodeling complex, the INO80 chromatin remodeling complex, and of the R2TP complex.

The protein resides in the nucleus. The enzyme catalyses ATP + H2O = ADP + phosphate + H(+). Its function is as follows. DNA helicase which participates in several chromatin remodeling complexes, including the SWR1 and the INO80 complexes. The SWR1 complex mediates the ATP-dependent exchange of histone H2A for the H2A variant HZT1 leading to transcriptional regulation of selected genes by chromatin remodeling. The INO80 complex remodels chromatin by shifting nucleosomes and is involved in DNA repair. Also involved in pre-rRNA processing. This Encephalitozoon cuniculi (strain GB-M1) (Microsporidian parasite) protein is RuvB-like protein 1 (RVB1).